A 427-amino-acid polypeptide reads, in one-letter code: Glutamate-1-semialdehyde 2,1-aminomutase (427 aa).

Lys265 is subject to N6-(pyridoxal phosphate)lysine.

Belongs to the class-III pyridoxal-phosphate-dependent aminotransferase family. HemL subfamily. In terms of assembly, homodimer. Requires pyridoxal 5'-phosphate as cofactor.

It localises to the cytoplasm. The enzyme catalyses (S)-4-amino-5-oxopentanoate = 5-aminolevulinate. It participates in porphyrin-containing compound metabolism; protoporphyrin-IX biosynthesis; 5-aminolevulinate from L-glutamyl-tRNA(Glu): step 2/2. The polypeptide is Glutamate-1-semialdehyde 2,1-aminomutase (Nitratiruptor sp. (strain SB155-2)).